A 221-amino-acid polypeptide reads, in one-letter code: Imidazole glycerol phosphate synthase subunit HisH (221 aa).

One can recognise a Glutamine amidotransferase type-1 domain in the interval 9–221 (DVVIIDTGCA…QILGNFLKMQ (213 aa)). Cysteine 84 acts as the Nucleophile in catalysis. Catalysis depends on residues histidine 202 and glutamate 204.

As to quaternary structure, heterodimer of HisH and HisF.

The protein resides in the cytoplasm. The catalysed reaction is 5-[(5-phospho-1-deoxy-D-ribulos-1-ylimino)methylamino]-1-(5-phospho-beta-D-ribosyl)imidazole-4-carboxamide + L-glutamine = D-erythro-1-(imidazol-4-yl)glycerol 3-phosphate + 5-amino-1-(5-phospho-beta-D-ribosyl)imidazole-4-carboxamide + L-glutamate + H(+). It catalyses the reaction L-glutamine + H2O = L-glutamate + NH4(+). Its pathway is amino-acid biosynthesis; L-histidine biosynthesis; L-histidine from 5-phospho-alpha-D-ribose 1-diphosphate: step 5/9. Functionally, IGPS catalyzes the conversion of PRFAR and glutamine to IGP, AICAR and glutamate. The HisH subunit catalyzes the hydrolysis of glutamine to glutamate and ammonia as part of the synthesis of IGP and AICAR. The resulting ammonia molecule is channeled to the active site of HisF. The polypeptide is Imidazole glycerol phosphate synthase subunit HisH (Shewanella oneidensis (strain ATCC 700550 / JCM 31522 / CIP 106686 / LMG 19005 / NCIMB 14063 / MR-1)).